A 97-amino-acid chain; its full sequence is Putative pterin-4-alpha-carbinolamine dehydratase (97 aa).

Belongs to the pterin-4-alpha-carbinolamine dehydratase family.

It carries out the reaction (4aS,6R)-4a-hydroxy-L-erythro-5,6,7,8-tetrahydrobiopterin = (6R)-L-erythro-6,7-dihydrobiopterin + H2O. This Opitutus terrae (strain DSM 11246 / JCM 15787 / PB90-1) protein is Putative pterin-4-alpha-carbinolamine dehydratase.